The primary structure comprises 133 residues: Small ribosomal subunit protein bS16 (133 aa).

Basic and acidic residues predominate over residues 83 to 101 (KRDARSNPKKAEPGKKAQE). Residues 83-102 (KRDARSNPKKAEPGKKAQER) form a disordered region.

This sequence belongs to the bacterial ribosomal protein bS16 family.

In Mesorhizobium japonicum (strain LMG 29417 / CECT 9101 / MAFF 303099) (Mesorhizobium loti (strain MAFF 303099)), this protein is Small ribosomal subunit protein bS16.